The sequence spans 558 residues: Inositol-3-phosphate synthase (558 aa).

The segment at Met-1–Glu-34 is disordered. NAD(+) is bound by residues Gly-99, Gly-100, Asn-101, Asn-102, Asp-174, Ser-210, Ile-211, Gln-221, Arg-224, Thr-262, Ala-263, Asn-264, Thr-265, Gly-313, Ser-314, Asp-338, Ser-341, Asn-372, Asn-373, Asp-374, Lys-387, Gly-439, Asp-440, Asp-468, and Ser-469.

This sequence belongs to the myo-inositol 1-phosphate synthase family. As to quaternary structure, homotetramer. The cofactor is NAD(+).

It localises to the cytoplasm. It carries out the reaction D-glucose 6-phosphate = 1D-myo-inositol 3-phosphate. The protein operates within polyol metabolism; myo-inositol biosynthesis; myo-inositol from D-glucose 6-phosphate: step 1/2. In terms of biological role, key enzyme in myo-inositol biosynthesis pathway that catalyzes the conversion of glucose 6-phosphate to 1-myo-inositol 1-phosphate in a NAD-dependent manner. Rate-limiting enzyme in the synthesis of all inositol-containing compounds. This is Inositol-3-phosphate synthase from Cryptococcus neoformans var. grubii serotype A (strain H99 / ATCC 208821 / CBS 10515 / FGSC 9487) (Filobasidiella neoformans var. grubii).